Here is a 145-residue protein sequence, read N- to C-terminus: D-aminoacyl-tRNA deacylase (145 aa).

The Gly-cisPro motif, important for rejection of L-amino acids motif lies at Gly-137–Pro-138.

This sequence belongs to the DTD family. Homodimer.

It localises to the cytoplasm. The enzyme catalyses glycyl-tRNA(Ala) + H2O = tRNA(Ala) + glycine + H(+). It carries out the reaction a D-aminoacyl-tRNA + H2O = a tRNA + a D-alpha-amino acid + H(+). Functionally, an aminoacyl-tRNA editing enzyme that deacylates mischarged D-aminoacyl-tRNAs. Also deacylates mischarged glycyl-tRNA(Ala), protecting cells against glycine mischarging by AlaRS. Acts via tRNA-based rather than protein-based catalysis; rejects L-amino acids rather than detecting D-amino acids in the active site. By recycling D-aminoacyl-tRNA to D-amino acids and free tRNA molecules, this enzyme counteracts the toxicity associated with the formation of D-aminoacyl-tRNA entities in vivo and helps enforce protein L-homochirality. The polypeptide is D-aminoacyl-tRNA deacylase (Francisella tularensis subsp. holarctica (strain FTNF002-00 / FTA)).